A 462-amino-acid chain; its full sequence is Acetyl-CoA decarbonylase/synthase complex subunit gamma (462 aa).

A 4Fe-4S domain is found at 1 to 60 (MAQLSAMDVYNLLPKANCGACGCKTCMEFATKLVNREAKPEDCPKLDDESLEKLQELLAP). Residues Cys-18, Cys-21, Cys-26, and Cys-43 each coordinate [4Fe-4S] cluster.

Heterodimer of delta and gamma chains. The ACDS complex is made up of alpha, epsilon, beta, gamma and delta chains with a probable stoichiometry of (alpha(2)epsilon(2))(4)-beta(8)-(gamma(1)delta(1))(8). It depends on corrinoid as a cofactor. [4Fe-4S] cluster serves as cofactor.

The enzyme catalyses 5,6,7,8-tetrahydrosarcinapterin + methyl-Co(III)-[corrinoid Fe-S protein] = 5-methyltetrahydrosarcinapterin + Co(I)-[corrinoid Fe-S protein] + H(+). Functionally, part of a complex that catalyzes the reversible cleavage of acetyl-CoA, allowing autotrophic growth from CO(2). This chain is Acetyl-CoA decarbonylase/synthase complex subunit gamma, found in Methanopyrus kandleri (strain AV19 / DSM 6324 / JCM 9639 / NBRC 100938).